Here is a 318-residue protein sequence, read N- to C-terminus: Methionyl-tRNA formyltransferase (318 aa).

114-117 is a binding site for (6S)-5,6,7,8-tetrahydrofolate; the sequence is SVLP.

Belongs to the Fmt family.

It catalyses the reaction L-methionyl-tRNA(fMet) + (6R)-10-formyltetrahydrofolate = N-formyl-L-methionyl-tRNA(fMet) + (6S)-5,6,7,8-tetrahydrofolate + H(+). Attaches a formyl group to the free amino group of methionyl-tRNA(fMet). The formyl group appears to play a dual role in the initiator identity of N-formylmethionyl-tRNA by promoting its recognition by IF2 and preventing the misappropriation of this tRNA by the elongation apparatus. The polypeptide is Methionyl-tRNA formyltransferase (Bdellovibrio bacteriovorus (strain ATCC 15356 / DSM 50701 / NCIMB 9529 / HD100)).